We begin with the raw amino-acid sequence, 84 residues long: uncharacterized protein (84 aa).

The LITAF domain occupies 1–83; it reads MDDKFTTLPC…CKQAVFVYKI (83 aa). Zn(2+) contacts are provided by C21 and C24. The interval 39 to 61 is membrane-binding amphipathic helix; sequence MSWVVCTAITLACLPCCCIPFLC. Positions 71 and 74 each coordinate Zn(2+).

The protein resides in the host membrane. This is an uncharacterized protein from Dryophytes versicolor (chameleon treefrog).